A 177-amino-acid chain; its full sequence is Acireductone dioxygenase (177 aa).

Positions 99, 101, 105, and 143 each coordinate Fe(2+). Residues histidine 99, histidine 101, glutamate 105, and histidine 143 each contribute to the Ni(2+) site.

The protein belongs to the acireductone dioxygenase (ARD) family. In terms of assembly, monomer. Fe(2+) serves as cofactor. The cofactor is Ni(2+).

It carries out the reaction 1,2-dihydroxy-5-(methylsulfanyl)pent-1-en-3-one + O2 = 3-(methylsulfanyl)propanoate + CO + formate + 2 H(+). It catalyses the reaction 1,2-dihydroxy-5-(methylsulfanyl)pent-1-en-3-one + O2 = 4-methylsulfanyl-2-oxobutanoate + formate + 2 H(+). It participates in amino-acid biosynthesis; L-methionine biosynthesis via salvage pathway; L-methionine from S-methyl-5-thio-alpha-D-ribose 1-phosphate: step 5/6. In terms of biological role, catalyzes 2 different reactions between oxygen and the acireductone 1,2-dihydroxy-3-keto-5-methylthiopentene (DHK-MTPene) depending upon the metal bound in the active site. Fe-containing acireductone dioxygenase (Fe-ARD) produces formate and 2-keto-4-methylthiobutyrate (KMTB), the alpha-ketoacid precursor of methionine in the methionine recycle pathway. Ni-containing acireductone dioxygenase (Ni-ARD) produces methylthiopropionate, carbon monoxide and formate, and does not lie on the methionine recycle pathway. This is Acireductone dioxygenase from Leptospira borgpetersenii serovar Hardjo-bovis (strain L550).